The chain runs to 638 residues: Neuroendocrine convertase 2 (638 aa).

Residues 1 to 25 form the signal peptide; that stretch reads MKGGCVSQWKAAAGLLFCVTVFASA. A propeptide spanning residues 26–109 is cleaved from the precursor; it reads ERPVFTNHFL…QQEGFDRKKR (84 aa). Residues 129-453 enclose the Peptidase S8 domain; the sequence is QWYLINTGQA…YGVLDAGAMV (325 aa). Active-site charge relay system residues include Asp-167 and His-208. 2 disulfides stabilise this stretch: Cys-225–Cys-376 and Cys-317–Cys-347. The N-linked (GlcNAc...) asparagine glycan is linked to Asn-375. The active-site Charge relay system is Ser-384. One can recognise a P/Homo B domain in the interval 461–597; that stretch reads TVPERFHCVG…TLMLHGSQSA (137 aa). A disulfide bridge connects residues Cys-468 and Cys-494. N-linked (GlcNAc...) asparagine glycosylation is found at Asn-514 and Asn-524.

It belongs to the peptidase S8 family. Furin subfamily.

The protein localises to the cytoplasmic vesicle. It localises to the secretory vesicle. The protein resides in the secreted. It catalyses the reaction Release of protein hormones and neuropeptides from their precursors, generally by hydrolysis of -Lys-Arg-|- bonds.. Serine endopeptidase which is involved in the processing of hormone and other protein precursors at sites comprised of pairs of basic amino acid residues. Responsible for the release of glucagon from proglucagon in pancreatic A cells. In Sus scrofa (Pig), this protein is Neuroendocrine convertase 2 (PCSK2).